The following is a 1258-amino-acid chain: MPEKRLSAEPPEVTEEEFENYLATDNFLVDYFNEFLSLPTFPEAIRFNVDYGVFEVVNDAPQLLEKQLKKILQNQQPRNPIYDVVRKGKSDSKSTQKSVPCEDEAINVNYSIMCLKREQGINWIKRERLPAFLESDCYFEYRLAKLISQATWSSTGMNFIVGTNFTPWILRRPPAPPPPSTDEDNYMIMKKFYVSLGQASYTQTKDWFTLAKESENTVTMASLPCCIPHHQTASPVIATASEIFDDGVHPRTIKSLSKSSKAVSELDEEEEGSISMKDSPSQALLRVYLEKKGGKERNLTLHFSSVEEFLDAYIIFILREAIQHITGQSLSDTPEYINYYKVSHVIFDKVPPVPSNKAIVSPPVEMVEEISKDRLENVSLSSESESIGPESRADWCISHRTYDIGNRREFERFKKFLKGTLGERYWWLWMDIERLKVLKDPERHQRHLEKMKKCYLVSSGERYLSAEILSKFKLLHGSRWTADHLKNIQAEVLKPLLLYWAPRFCVTHSASAKNASTELKFWRLRQEKPRKDVDPFPQMATLLPLRPKSCIPQTPEVQGEEINLFQPSKFKKLSKINAGTQQLGRSEPLNAVSSKDGGLEKGSKRLPESTTVVRLTSFTDISECLKPQLERKYTYTEEHNVKTVSNVGALGGFDMENLLQSLYVENRAGFFFTKFCENSGNKLWKHSVYFWFDLQAYHQLFYQETLQPFKVCKQAQYLFATYIAPSASFDIGLHQEGKKDIYMKIQPPFEDLFDTAEEFILLSLLEPWTQMVMSDKMAYKKVELQEETRQLDSACFRKLHALHKETISKKAEDTTGYAMAKLSLSDVSKQTEYWLNVPEGYKHFTFTDLLNNKLEFEHFRQFLESHSSSLDLMCWIDIEQFRRIIFKDQKQREEKSIYIKNKYLNKKYFFGPRSPASLHQQNQIMLLSGGWGRILHEQLDASVLVEIQKHVLNRLENVWLPLFLSSEQFASRQKIKTQMKDIADELLLQRHDRKIGVWKPVESKWISSSCEIIAFRKALLNPVIARQFQRFVALKGDLLENGVLFWQEVQKFKDLCHSHCDESIIHKKITTIINCFINSYIPPALQIDIPVEQAQKILEHRKELGPYVFREAQMTIFGVLFKFWPQFCEFRKNLTDEKIMSVLERRQEHKQKRKASDTEEDKAGKSGVKQYASTTGSLTKPVLGSESLLVLQSYGRQPTWCYSKYIEALEQERILLKIQEEVERKMFTGTSSFTNLLKPSTGSALSLKKNVSLHSIQR.

A disordered region spans residues 581–604; that stretch reads QQLGRSEPLNAVSSKDGGLEKGSK. 2 consecutive RGS domains span residues 845–973 and 1014–1138; these read TFTD…ASRQ and AFRK…TDEK. Residues 1145 to 1172 form a disordered region; it reads RRQEHKQKRKASDTEEDKAGKSGVKQYA. A compositionally biased stretch (basic and acidic residues) spans 1154 to 1164; it reads KASDTEEDKAG.

In terms of assembly, interacts with GNA11, GNA12 and GNA13. As to expression, expressed testis, including in Leydig cells and spermatogenic cells from the spermatogonia to spermatid stages (at protein level).

The protein resides in the cytoplasm. Its subcellular location is the nucleus. In terms of biological role, inhibits signal transduction by increasing the GTPase activity of G protein alpha subunits thereby driving them into their inactive GDP-bound form. The chain is Regulator of G-protein signaling 22 (Rgs22) from Mus musculus (Mouse).